The chain runs to 116 residues: Iron-sulfur cluster insertion protein ErpA (116 aa).

The iron-sulfur cluster site is built by Cys-44, Cys-108, and Cys-110.

It belongs to the HesB/IscA family. Homodimer. It depends on iron-sulfur cluster as a cofactor.

Its function is as follows. Required for insertion of 4Fe-4S clusters for at least IspG. The sequence is that of Iron-sulfur cluster insertion protein ErpA from Idiomarina loihiensis (strain ATCC BAA-735 / DSM 15497 / L2-TR).